Reading from the N-terminus, the 393-residue chain is Interleukin-1 receptor type 2 (393 aa).

Residues 1–13 form the signal peptide; sequence MFRLYVLVMGVSA. Residues 14–347 lie on the Extracellular side of the membrane; that stretch reads FTLQPAAHTG…RTTVKEPPPT (334 aa). Disulfide bonds link Cys28/Cys116, Cys50/Cys108, and Cys152/Cys207. Ig-like C2-type domains are found at residues 29–120, 134–221, and 237–342; these read PVRG…DKVS, PFIS…YNIT, and PVII…TTVK. N-linked (GlcNAc...) asparagine glycans are attached at residues Asn66, Asn72, and Asn112. 2 N-linked (GlcNAc...) asparagine glycosylation sites follow: Asn219 and Asn277. Residues Cys258 and Cys326 are joined by a disulfide bond. The helical transmembrane segment at 348–368 threads the bilayer; it reads FSWGIVLAPLALAFLVLGGIW. Residues 369–393 are Cytoplasmic-facing; sequence MHRRCKHRTGKADGLTVLRPHHQDF.

Belongs to the interleukin-1 receptor family. Forms a non-signaling receptor complex consisting of IL1R2 and IL1RAP. In terms of processing, a soluble form (sIL1R2) can also be produced by proteolytic cleavage at the cell surface (shedding) involving a metalloproteinase.

The protein localises to the secreted. It localises to the cell membrane. Functionally, non-signaling receptor for IL1A, IL1B and IL1RN. Reduces IL1B activities. Serves as a decoy receptor by competitive binding to IL1B and preventing its binding to IL1R1. Also modulates cellular response through non-signaling association with IL1RAP after binding to IL1B. IL1R2 (membrane and secreted forms) preferentially binds IL1B and poorly IL1A and IL1RN. The secreted IL1R2 recruits secreted IL1RAP with high affinity; this complex formation may be the dominant mechanism for neutralization of IL1B by secreted/soluble receptors. The sequence is that of Interleukin-1 receptor type 2 (IL1R2) from Chlorocebus aethiops (Green monkey).